A 101-amino-acid polypeptide reads, in one-letter code: Small ribosomal subunit protein uS14A (101 aa).

A disordered region spans residues Ala47–Leu66.

This sequence belongs to the universal ribosomal protein uS14 family. In terms of assembly, part of the 30S ribosomal subunit. Contacts proteins S3 and S10.

Functionally, binds 16S rRNA, required for the assembly of 30S particles and may also be responsible for determining the conformation of the 16S rRNA at the A site. In Myxococcus xanthus (strain DK1622), this protein is Small ribosomal subunit protein uS14A.